The chain runs to 231 residues: Large ribosomal subunit protein uL1 (231 aa).

It belongs to the universal ribosomal protein uL1 family. As to quaternary structure, part of the 50S ribosomal subunit.

In terms of biological role, binds directly to 23S rRNA. The L1 stalk is quite mobile in the ribosome, and is involved in E site tRNA release. Protein L1 is also a translational repressor protein, it controls the translation of the L11 operon by binding to its mRNA. The protein is Large ribosomal subunit protein uL1 of Staphylococcus epidermidis (strain ATCC 35984 / DSM 28319 / BCRC 17069 / CCUG 31568 / BM 3577 / RP62A).